The sequence spans 397 residues: Corticosteroid-binding globulin (397 aa).

A signal peptide spans 1-22; that stretch reads MSLALYTCLFWLCTSGLWTTQA. N-linked (GlcNAc...) asparagine glycosylation is found at Asn89, Asn169, Asn217, and Asn232. Gln247 is a binding site for cortisol. Asn253 carries N-linked (GlcNAc...) asparagine glycosylation. Cortisol is bound at residue Asp279. The N-linked (GlcNAc...) asparagine glycan is linked to Asn320. Trp385 provides a ligand contact to cortisol.

It belongs to the serpin family. Expressed by the liver; secreted in plasma.

It localises to the secreted. Major transport protein for glucocorticoids and progestins in the blood of almost all vertebrate species. The protein is Corticosteroid-binding globulin (Serpina6) of Mus musculus (Mouse).